Here is a 780-residue protein sequence, read N- to C-terminus: Translation initiation factor IF-2 (780 aa).

The tract at residues 44-194 is disordered; it reads RQLDNAVDGT…TPPKPKELPE (151 aa). Over residues 53–65 the composition is skewed to basic and acidic residues; the sequence is TNKKAEAPKKETT. Residues 66–81 show a composition bias toward polar residues; the sequence is SNENGNSKGPNKPNMT. Composition is skewed to low complexity over residues 82–93 and 117–168; these read NSNEKSNKPNKP and ANTS…NNKG. The region spanning 281–450 is the tr-type G domain; sequence ERPPVVTIMG…LLVSEVEELK (170 aa). The segment at 290-297 is G1; it reads GHVDHGKT. Position 290 to 297 (290 to 297) interacts with GTP; that stretch reads GHVDHGKT. Residues 315–319 are G2; sequence GITQH. Residues 336 to 339 form a G3 region; the sequence is DTPG. GTP-binding positions include 336–340 and 390–393; these read DTPGH and NKID. The interval 390 to 393 is G4; it reads NKID. The interval 426 to 428 is G5; it reads SAK.

This sequence belongs to the TRAFAC class translation factor GTPase superfamily. Classic translation factor GTPase family. IF-2 subfamily.

It is found in the cytoplasm. In terms of biological role, one of the essential components for the initiation of protein synthesis. Protects formylmethionyl-tRNA from spontaneous hydrolysis and promotes its binding to the 30S ribosomal subunits. Also involved in the hydrolysis of GTP during the formation of the 70S ribosomal complex. The chain is Translation initiation factor IF-2 from Listeria welshimeri serovar 6b (strain ATCC 35897 / DSM 20650 / CCUG 15529 / CIP 8149 / NCTC 11857 / SLCC 5334 / V8).